A 695-amino-acid chain; its full sequence is MSGAALGLEIVFVFFLALFLLHRYGDFKKQHRLVIIGTLLAWYLCFLIVFILPLDVSTTIYNRCKHAAANSSPPENSNITGLYATANPVPSQHPCFKPWSYIPDGIMPIFWRVVYWTSQFLTWILLPFMQSYARSGGFSITGKIKTALIENAIYYGTYLLIFGAFLIYVAVNPHLHLEWNQLQTIGIAAANTWGLFLLVLLLGYGLVEIPRSYWNGAKRGYLLMKTYFKAAKLMTEKADAEENLEDAMEEVRKVNESIKYNHPLRKCVDTILKKCPTEYQEKMGRNMDDYEDFDEKHSIYPSEKSLVKLHKQVIYSVQRHRRTQVQWQILLEQAFYLEDVAKNETSATHQFVHTFQSPEPENRFIQYFYNPTFEWYWECLLRPWFYKILAVVLSIFSVIVVWSECTFFSTTPVLSLFAVFIQLAEKTYNYIYIEIACFLSIFFLSICVYSTVFRIRVFNYYYLASHHQTDAYSLLFSGMLFCRLTPPLCLNFLGLTHMDSSISHKNTQPTAYTSIMGSMKVLSFIADGFYIYYPMLVVILCIATYFSLGTRCLNLLGFQQFMGDDDMTSDLVNEGKELIRKEKRKRQRQEEGENRRREWKERYGHNREDSTRNRNIHTDPKESNFSDVNTNRSAFKYTRANNRTERDRIELLQDAEPLDFNAETFTDDPLESESGRYQPGGRYLSMSRSDIFNDV.

The Extracellular portion of the chain corresponds to 1-5; the sequence is MSGAA. A helical transmembrane segment spans residues 6-21; it reads LGLEIVFVFFLALFLL. The Cytoplasmic portion of the chain corresponds to 22 to 32; that stretch reads HRYGDFKKQHR. Residues 33–53 form a helical membrane-spanning segment; it reads LVIIGTLLAWYLCFLIVFILP. Residues 54-105 lie on the Extracellular side of the membrane; it reads LDVSTTIYNRCKHAAANSSPPENSNITGLYATANPVPSQHPCFKPWSYIPDG. N-linked (GlcNAc...) asparagine glycosylation occurs at Asn-78. The chain crosses the membrane as a helical span at residues 106 to 126; sequence IMPIFWRVVYWTSQFLTWILL. Residues 127–150 lie on the Cytoplasmic side of the membrane; the sequence is PFMQSYARSGGFSITGKIKTALIE. Residues 151–171 traverse the membrane as a helical segment; that stretch reads NAIYYGTYLLIFGAFLIYVAV. Over 172–186 the chain is Extracellular; it reads NPHLHLEWNQLQTIG. The chain crosses the membrane as a helical span at residues 187–207; that stretch reads IAAANTWGLFLLVLLLGYGLV. Over 208-387 the chain is Cytoplasmic; it reads EIPRSYWNGA…ECLLRPWFYK (180 aa). The stretch at 227 to 262 forms a coiled coil; sequence YFKAAKLMTEKADAEENLEDAMEEVRKVNESIKYNH. A helical transmembrane segment spans residues 388–408; that stretch reads ILAVVLSIFSVIVVWSECTFF. Residues 409-432 are Extracellular-facing; the sequence is STTPVLSLFAVFIQLAEKTYNYIY. Residues 433 to 453 traverse the membrane as a helical segment; it reads IEIACFLSIFFLSICVYSTVF. Over 454 to 473 the chain is Cytoplasmic; that stretch reads RIRVFNYYYLASHHQTDAYS. A helical transmembrane segment spans residues 474 to 494; that stretch reads LLFSGMLFCRLTPPLCLNFLG. Topologically, residues 495 to 521 are extracellular; sequence LTHMDSSISHKNTQPTAYTSIMGSMKV. Residues 522–542 form a helical membrane-spanning segment; sequence LSFIADGFYIYYPMLVVILCI. Residues 543–695 are Cytoplasmic-facing; sequence ATYFSLGTRC…MSRSDIFNDV (153 aa). Residues 571-603 adopt a coiled-coil conformation; sequence LVNEGKELIRKEKRKRQRQEEGENRRREWKERY. The tract at residues 581–628 is disordered; the sequence is KEKRKRQRQEEGENRRREWKERYGHNREDSTRNRNIHTDPKESNFSDV. A compositionally biased stretch (basic and acidic residues) spans 588 to 624; it reads RQEEGENRRREWKERYGHNREDSTRNRNIHTDPKESN. Position 633 is a phosphoserine (Ser-633). Residues 662 to 682 are disordered; it reads AETFTDDPLESESGRYQPGGR.

This sequence belongs to the LIMR family.

It localises to the cell membrane. Functionally, recruited to ligand-activated beta-2 adrenergic receptor/ADRB2, it negatively regulates the adrenergic receptor signaling pathway. May also regulate other G-protein coupled receptors including type-1 angiotensin II receptor/AGTR1. The chain is G-protein coupled receptor-associated protein LMBRD2 from Homo sapiens (Human).